The following is a 58-amino-acid chain: UPF0339 protein Msl4696 (58 aa).

The protein belongs to the UPF0339 family.

The sequence is that of UPF0339 protein Msl4696 from Mesorhizobium japonicum (strain LMG 29417 / CECT 9101 / MAFF 303099) (Mesorhizobium loti (strain MAFF 303099)).